A 671-amino-acid chain; its full sequence is Solute carrier family 5 member 4 (671 aa).

Topologically, residues methionine 1–alanine 38 are cytoplasmic. A helical transmembrane segment spans residues aspartate 39–valine 59. Residues lysine 60 to threonine 65 lie on the Extracellular side of the membrane. Residues valine 66–phenylalanine 86 traverse the membrane as a helical segment. The Cytoplasmic segment spans residues alanine 87–asparagine 89. Residues isoleucine 90–threonine 110 form a helical membrane-spanning segment. The Extracellular portion of the chain corresponds to alanine 111–serine 116. The chain crosses the membrane as a helical span at residues phenylalanine 117–methionine 137. Residues threonine 138–leucine 159 are Cytoplasmic-facing. A helical membrane pass occupies residues serine 160–isoleucine 180. A topological domain (extracellular) is located at residue lysine 181. A helical transmembrane segment spans residues leucine 182–phenylalanine 202. Residues threonine 203 to glutamine 218 are Cytoplasmic-facing. The chain crosses the membrane as a helical span at residues alanine 219–glycine 239. The Extracellular portion of the chain corresponds to tyrosine 240–proline 288. The chain crosses the membrane as a helical span at residues glycine 289 to valine 309. The Cytoplasmic segment spans residues glutamine 310–alanine 324. A helical membrane pass occupies residues cysteine 325–isoleucine 345. Topologically, residues serine 346 to proline 378 are extracellular. The helical transmembrane segment at methionine 379 to alanine 399 threads the bilayer. Residues serine 400–leucine 434 are Cytoplasmic-facing. The chain crosses the membrane as a helical span at residues isoleucine 435–valine 455. Residues glutamate 456 to threonine 467 are Extracellular-facing. Residues glutamate 468–cysteine 488 traverse the membrane as a helical segment. Over lysine 489–glutamine 494 the chain is Cytoplasmic. The chain crosses the membrane as a helical span at residues glycine 495 to phenylalanine 515. Residues serine 516 to tyrosine 537 are Extracellular-facing. Residues leucine 538 to leucine 558 form a helical membrane-spanning segment. At threonine 559–threonine 650 the chain is on the cytoplasmic side. Residues aspartate 583–glutamate 593 show a composition bias toward acidic residues. A disordered region spans residues aspartate 583–glutamate 604. Residues alanine 594 to glutamate 604 show a composition bias toward basic and acidic residues. The helical transmembrane segment at valine 651–alanine 671 threads the bilayer.

Belongs to the sodium:solute symporter (SSF) (TC 2.A.21) family.

The protein resides in the cell membrane. Functionally, generates D-glucose-induced depolarization in a pH-dependent and Na(+)-independent manner, with activity in acidic conditions (pH 5) but not neutral conditions. In Rattus norvegicus (Rat), this protein is Solute carrier family 5 member 4.